Consider the following 220-residue polypeptide: Fructose-6-phosphate aldolase (220 aa).

Residue Lys85 is the Schiff-base intermediate with substrate of the active site.

It belongs to the transaldolase family. Type 3A subfamily. As to quaternary structure, homodecamer.

Its subcellular location is the cytoplasm. It catalyses the reaction beta-D-fructose 6-phosphate = dihydroxyacetone + D-glyceraldehyde 3-phosphate. Catalyzes the reversible formation of fructose 6-phosphate from dihydroxyacetone and D-glyceraldehyde 3-phosphate via an aldolization reaction. The sequence is that of Fructose-6-phosphate aldolase from Enterobacter sp. (strain 638).